A 1055-amino-acid chain; its full sequence is SMC5-SMC6 complex localization factor protein 1 (1055 aa).

BRCT domains are found at residues 2–80 (EDDA…AQSG) and 121–199 (PGAF…LLEK). The tract at residues 312-332 (KKRKKEKERDSRKDIEHDRST) is disordered. Basic and acidic residues predominate over residues 318–332 (KERDSRKDIEHDRST). The segment at 407–1055 (PRGILNLIES…VMCRSVTEIS (649 aa)) is NSE5-like domain; mediates interaction with SLF2. 3 ANK repeats span residues 804-834 (KGET…DINV), 838-867 (AGWT…EVDL), and 872-901 (DGVT…PVLL). Residue Lys929 forms a Glycyl lysine isopeptide (Lys-Gly) (interchain with G-Cter in SUMO2) linkage.

In terms of assembly, interacts (via N-terminus) with SLF2; this interaction links RAD18 to the SMC5-SMC6 complex. Interacts (via BRCT domains) with RAD18; this interaction occurs in a SLF2-independent manner. Interacts with SMC6. Interacts (via BRCT domains) with RAD18 (via C-terminus and phosphorylated form); this interaction is required for efficient repair of UV-induced DNA damage.

It is found in the nucleus. The protein resides in the cytoplasm. The protein localises to the cytoskeleton. It localises to the microtubule organizing center. Its subcellular location is the centrosome. In terms of biological role, plays a role in the DNA damage response (DDR) pathway by regulating postreplication repair of UV-damaged DNA and genomic stability maintenance. The SLF1-SLF2 complex acts to link RAD18 with the SMC5-SMC6 complex at replication-coupled interstrand cross-links (ICL) and DNA double-strand breaks (DSBs) sites on chromatin during DNA repair in response to stalled replication forks. Promotes the recruitment of SLF2 and the SMC5-SMC6 complex to DNA lesions. In Bos taurus (Bovine), this protein is SMC5-SMC6 complex localization factor protein 1.